Consider the following 546-residue polypeptide: Glutathione synthetase, chloroplastic (546 aa).

Residues 1-63 constitute a chloroplast transit peptide; the sequence is MGSGCSSPSI…SPLKCAKVPE (63 aa). R200 contacts substrate. Residue E216 coordinates ATP. Residues E216 and N218 each coordinate Mg(2+). Substrate contacts are provided by residues 220 to 223, 288 to 290, Q294, and 342 to 345; these read ISSS, ERN, and RAGY. ATP contacts are provided by residues K381, 435–444, Y446, 471–474, and E497; these read KPQREGGGNN and MQRI. Residue E439 participates in Mg(2+) binding. R522 is a binding site for substrate. Residues K524 and E530 each coordinate ATP. Residue 533-534 participates in substrate binding; sequence VA.

This sequence belongs to the eukaryotic GSH synthase family. Homodimer. Mg(2+) is required as a cofactor.

The protein localises to the plastid. The protein resides in the chloroplast. It carries out the reaction gamma-L-glutamyl-L-cysteine + glycine + ATP = glutathione + ADP + phosphate + H(+). It participates in sulfur metabolism; glutathione biosynthesis; glutathione from L-cysteine and L-glutamate: step 2/2. This Solanum lycopersicum (Tomato) protein is Glutathione synthetase, chloroplastic (GSH2).